Reading from the N-terminus, the 351-residue chain is S-adenosylmethionine:tRNA ribosyltransferase-isomerase (351 aa).

This sequence belongs to the QueA family. Monomer.

It localises to the cytoplasm. The enzyme catalyses 7-aminomethyl-7-carbaguanosine(34) in tRNA + S-adenosyl-L-methionine = epoxyqueuosine(34) in tRNA + adenine + L-methionine + 2 H(+). The protein operates within tRNA modification; tRNA-queuosine biosynthesis. Its function is as follows. Transfers and isomerizes the ribose moiety from AdoMet to the 7-aminomethyl group of 7-deazaguanine (preQ1-tRNA) to give epoxyqueuosine (oQ-tRNA). This Hyphomonas neptunium (strain ATCC 15444) protein is S-adenosylmethionine:tRNA ribosyltransferase-isomerase.